The following is a 486-amino-acid chain: Glutamyl-tRNA(Gln) amidotransferase subunit A (486 aa).

Active-site charge relay system residues include Lys77 and Ser152. Ser176 (acyl-ester intermediate) is an active-site residue.

It belongs to the amidase family. GatA subfamily. As to quaternary structure, heterotrimer of A, B and C subunits.

The enzyme catalyses L-glutamyl-tRNA(Gln) + L-glutamine + ATP + H2O = L-glutaminyl-tRNA(Gln) + L-glutamate + ADP + phosphate + H(+). Its function is as follows. Allows the formation of correctly charged Gln-tRNA(Gln) through the transamidation of misacylated Glu-tRNA(Gln) in organisms which lack glutaminyl-tRNA synthetase. The reaction takes place in the presence of glutamine and ATP through an activated gamma-phospho-Glu-tRNA(Gln). This Pediococcus pentosaceus (strain ATCC 25745 / CCUG 21536 / LMG 10740 / 183-1w) protein is Glutamyl-tRNA(Gln) amidotransferase subunit A.